A 60-amino-acid chain; its full sequence is Large ribosomal subunit protein bL32A (60 aa).

Positions 1–19 (MAVPKRRMSRSNTRSRRSQ) are enriched in basic residues. Positions 1–21 (MAVPKRRMSRSNTRSRRSQWK) are disordered.

It belongs to the bacterial ribosomal protein bL32 family.

In Nocardia farcinica (strain IFM 10152), this protein is Large ribosomal subunit protein bL32A.